We begin with the raw amino-acid sequence, 160 residues long: MVPKLFTSQICLLLLLGLMGVEGSLHAKPGQFTWAQWFEIQHINMTSGQCTNAMQVINNYQRRCKNQNTFLLTTFADVVHVCGNPSMPCPSNTSLNNCHHSGVQVPLIHCNLTTPSRRISNCRYTQTTANKYYIVACNNSDPVRDPPQYPVVPVHLDRII.

The first 27 residues, 1 to 27 (MVPKLFTSQICLLLLLGLMGVEGSLHA), serve as a signal peptide directing secretion. C-linked (Man) tryptophan glycosylation is present at tryptophan 34. Histidine 42 (proton acceptor) is an active-site residue. An N-linked (GlcNAc...) asparagine glycan is attached at asparagine 44. Cystine bridges form between cysteine 50–cysteine 110, cysteine 64–cysteine 122, cysteine 82–cysteine 137, and cysteine 89–cysteine 98. Tyrosine 60 is modified (3'-nitrotyrosine). 65-69 (KNQNT) is a binding site for substrate. N-linked (GlcNAc...) asparagine glycans are attached at residues asparagine 92, asparagine 111, and asparagine 138. Histidine 155 serves as the catalytic Proton donor.

Belongs to the pancreatic ribonuclease family. As to quaternary structure, interacts with and forms a tight 1:1 complex with RNH1. Dimerization of two such complexes may occur.

It localises to the lysosome. Its subcellular location is the cytoplasmic granule. It catalyses the reaction an [RNA] containing cytidine + H2O = an [RNA]-3'-cytidine-3'-phosphate + a 5'-hydroxy-ribonucleotide-3'-[RNA].. It carries out the reaction an [RNA] containing uridine + H2O = an [RNA]-3'-uridine-3'-phosphate + a 5'-hydroxy-ribonucleotide-3'-[RNA].. In terms of biological role, this is a non-secretory ribonuclease. It is a pyrimidine specific nuclease with a slight preference for U. Cytotoxin and helminthotoxin. Possesses a wide variety of biological activities. In Macaca fascicularis (Crab-eating macaque), this protein is Non-secretory ribonuclease (RNASE2).